The sequence spans 57 residues: Large ribosomal subunit protein eL20 (57 aa).

The span at 1–10 (MSEFTVTGTF) shows a compositional bias: polar residues. Positions 1–21 (MSEFTVTGTFESRDGNQPFEK) are disordered.

Belongs to the eukaryotic ribosomal protein eL20 family. As to quaternary structure, part of the 50S ribosomal subunit. Binds 23S rRNA.

This Halomicrobium mukohataei (strain ATCC 700874 / DSM 12286 / JCM 9738 / NCIMB 13541) (Haloarcula mukohataei) protein is Large ribosomal subunit protein eL20.